Reading from the N-terminus, the 804-residue chain is Lon protease (804 aa).

The interval 1 to 23 (MSADSENETSESSPAGEATASTS) is disordered. Residues 30 to 224 (LILLPVRNAV…KVLDAVAGRI (195 aa)) form the Lon N-terminal domain. 376–383 (GPPGVGKT) provides a ligand contact to ATP. Residues 612-793 (TSLPGVVTGL…DDAVREIIED (182 aa)) form the Lon proteolytic domain. Catalysis depends on residues Ser699 and Lys742.

Belongs to the peptidase S16 family. Homohexamer. Organized in a ring with a central cavity.

Its subcellular location is the cytoplasm. The enzyme catalyses Hydrolysis of proteins in presence of ATP.. ATP-dependent serine protease that mediates the selective degradation of mutant and abnormal proteins as well as certain short-lived regulatory proteins. Required for cellular homeostasis and for survival from DNA damage and developmental changes induced by stress. Degrades polypeptides processively to yield small peptide fragments that are 5 to 10 amino acids long. Binds to DNA in a double-stranded, site-specific manner. The sequence is that of Lon protease from Paraburkholderia phytofirmans (strain DSM 17436 / LMG 22146 / PsJN) (Burkholderia phytofirmans).